The primary structure comprises 472 residues: Argininosuccinate lyase (472 aa).

This sequence belongs to the lyase 1 family. Argininosuccinate lyase subfamily.

It localises to the cytoplasm. It catalyses the reaction 2-(N(omega)-L-arginino)succinate = fumarate + L-arginine. It functions in the pathway amino-acid biosynthesis; L-arginine biosynthesis; L-arginine from L-ornithine and carbamoyl phosphate: step 3/3. The chain is Argininosuccinate lyase from Polynucleobacter asymbioticus (strain DSM 18221 / CIP 109841 / QLW-P1DMWA-1) (Polynucleobacter necessarius subsp. asymbioticus).